A 137-amino-acid polypeptide reads, in one-letter code: Small ribosomal subunit protein uS12 (137 aa).

Residues 1-55 (MPTINQLVRKPRKSKTKQSDSPALNRGFNSKKKQFTNLNSPQKRGVCTRVGTMTP) are disordered. Aspartate 102 is modified (3-methylthioaspartic acid). Residues 118-137 (SGVDGRRQGRSLYGTKKPKN) form a disordered region.

Belongs to the universal ribosomal protein uS12 family. Part of the 30S ribosomal subunit. Contacts proteins S8 and S17. May interact with IF1 in the 30S initiation complex.

Functionally, with S4 and S5 plays an important role in translational accuracy. In terms of biological role, interacts with and stabilizes bases of the 16S rRNA that are involved in tRNA selection in the A site and with the mRNA backbone. Located at the interface of the 30S and 50S subunits, it traverses the body of the 30S subunit contacting proteins on the other side and probably holding the rRNA structure together. The combined cluster of proteins S8, S12 and S17 appears to hold together the shoulder and platform of the 30S subunit. The polypeptide is Small ribosomal subunit protein uS12 (Staphylococcus epidermidis (strain ATCC 35984 / DSM 28319 / BCRC 17069 / CCUG 31568 / BM 3577 / RP62A)).